The primary structure comprises 450 residues: Serine/threonine-protein kinase-transforming protein Rmil (450 aa).

2 stretches are compositionally biased toward basic and acidic residues: residues 1-14 (MEAVIKDLIRDQGV) and 49-73 (QRERKSSSSSEDRNRMKTLGRRDSS). The disordered stretch occupies residues 1–80 (MEAVIKDLIR…DSSDDWEIPD (80 aa)). The region spanning 83-343 (ITVGQRIGSG…PQILASIELL (261 aa)) is the Protein kinase domain. ATP contacts are provided by residues 89–97 (IGSGSFGTV) and Lys109. Asp202 functions as the Proton acceptor in the catalytic mechanism.

The protein belongs to the protein kinase superfamily. TKL Ser/Thr protein kinase family. RAF subfamily.

It catalyses the reaction L-seryl-[protein] + ATP = O-phospho-L-seryl-[protein] + ADP + H(+). The catalysed reaction is L-threonyl-[protein] + ATP = O-phospho-L-threonyl-[protein] + ADP + H(+). The polypeptide is Serine/threonine-protein kinase-transforming protein Rmil (V-RMIL) (Avian rous-associated virus type 1).